A 102-amino-acid polypeptide reads, in one-letter code: Putative nuclear receptor corepressor 1-like protein NCOR1P1 (102 aa).

The segment covering 1–18 has biased composition (polar residues); that stretch reads MSSSGYPPNQGAFSTEQS. Positions 1–68 are disordered; sequence MSSSGYPPNQ…DQNASPSKLS (68 aa). A coiled-coil region spans residues 68 to 100; that stretch reads SKEELIECMDRVDREIAKVEQQILKLKKKQVKV.

The protein belongs to the N-CoR nuclear receptor corepressors family.

The protein is Putative nuclear receptor corepressor 1-like protein NCOR1P1 (NCOR1P1) of Homo sapiens (Human).